A 359-amino-acid chain; its full sequence is Dual-specificity RNA methyltransferase RlmN 1 (359 aa).

Glu96 acts as the Proton acceptor in catalysis. The region spanning 102–335 (FKGRATVCIS…STVRQRRGID (234 aa)) is the Radical SAM core domain. Cysteines 109 and 340 form a disulfide. The [4Fe-4S] cluster site is built by Cys116, Cys120, and Cys123. S-adenosyl-L-methionine contacts are provided by residues 166-167 (GE), Ser198, 221-223 (SLH), and Asn297. Cys340 acts as the S-methylcysteine intermediate in catalysis.

Belongs to the radical SAM superfamily. RlmN family. [4Fe-4S] cluster serves as cofactor.

The protein localises to the cytoplasm. The enzyme catalyses adenosine(2503) in 23S rRNA + 2 reduced [2Fe-2S]-[ferredoxin] + 2 S-adenosyl-L-methionine = 2-methyladenosine(2503) in 23S rRNA + 5'-deoxyadenosine + L-methionine + 2 oxidized [2Fe-2S]-[ferredoxin] + S-adenosyl-L-homocysteine. It catalyses the reaction adenosine(37) in tRNA + 2 reduced [2Fe-2S]-[ferredoxin] + 2 S-adenosyl-L-methionine = 2-methyladenosine(37) in tRNA + 5'-deoxyadenosine + L-methionine + 2 oxidized [2Fe-2S]-[ferredoxin] + S-adenosyl-L-homocysteine. Its function is as follows. Specifically methylates position 2 of adenine 2503 in 23S rRNA and position 2 of adenine 37 in tRNAs. m2A2503 modification seems to play a crucial role in the proofreading step occurring at the peptidyl transferase center and thus would serve to optimize ribosomal fidelity. This is Dual-specificity RNA methyltransferase RlmN 1 from Myxococcus xanthus (strain DK1622).